The primary structure comprises 286 residues: Octanoyltransferase (286 aa).

Positions 50 to 278 (LRTPDELWIV…NIAQRHAGVI (229 aa)) constitute a BPL/LPL catalytic domain. Substrate contacts are provided by residues 89 to 96 (RGGQVTWH), 190 to 192 (SLG), and 203 to 205 (GVA). The Acyl-thioester intermediate role is filled by C221.

The protein belongs to the LipB family.

It is found in the cytoplasm. It carries out the reaction octanoyl-[ACP] + L-lysyl-[protein] = N(6)-octanoyl-L-lysyl-[protein] + holo-[ACP] + H(+). It functions in the pathway protein modification; protein lipoylation via endogenous pathway; protein N(6)-(lipoyl)lysine from octanoyl-[acyl-carrier-protein]: step 1/2. Catalyzes the transfer of endogenously produced octanoic acid from octanoyl-acyl-carrier-protein onto the lipoyl domains of lipoate-dependent enzymes. Lipoyl-ACP can also act as a substrate although octanoyl-ACP is likely to be the physiological substrate. The protein is Octanoyltransferase of Psychrobacter arcticus (strain DSM 17307 / VKM B-2377 / 273-4).